The following is a 185-amino-acid chain: Ribosome-recycling factor (185 aa).

This sequence belongs to the RRF family.

It localises to the cytoplasm. Functionally, responsible for the release of ribosomes from messenger RNA at the termination of protein biosynthesis. May increase the efficiency of translation by recycling ribosomes from one round of translation to another. This chain is Ribosome-recycling factor, found in Acidothermus cellulolyticus (strain ATCC 43068 / DSM 8971 / 11B).